Here is a 29-residue protein sequence, read N- to C-terminus: Galanin (29 aa).

Position 29 is an alanine amide (alanine 29).

Belongs to the galanin family.

The protein resides in the secreted. In terms of biological role, contracts smooth muscle of the gastrointestinal and genitourinary tract, regulates growth hormone release, modulates insulin release, and may be involved in the control of adrenal secretion. The sequence is that of Galanin (gal) from Amia calva (Bowfin).